Consider the following 721-residue polypeptide: Angiomotin-like 2a (721 aa).

Residues Gln35 to His84 form a disordered region. Low complexity predominate over residues Ser49–Ser68. Tyr103 bears the Phosphotyrosine; by FGFR1 mark. A disordered region spans residues Asp169 to Ser214. The span at Pro172–Gln198 shows a compositional bias: polar residues. Positions Ala275–Glu531 form a coiled coil. Positions Ile554–Asn567 are enriched in polar residues. 2 disordered regions span residues Ile554–His575 and Asp666–Ser709. Residues Ser688–Ser702 show a composition bias toward low complexity. The PDZ-binding motif lies at Glu718–Ile721.

Belongs to the angiomotin family. As to quaternary structure, interacts with SRC. Post-translationally, phosphorylation at Tyr-103 is necessary for efficient binding to SRC and synergistically functioning with SRC to activate the downstream MAPK pathway. Expressed in endothelial cells.

It localises to the recycling endosome. It is found in the cytoplasm. The protein resides in the cell projection. Its subcellular location is the podosome. The protein localises to the cell junction. Its function is as follows. Required for proper architecture of actin filaments and for cell movements during embryogenesis. Plays a role in the radial actin fiber architecture in skin epithelial cells, thereby maintains cell geometry, size and cell interconnectivity within the skin. Plays an important role in coupling actin fibers to cell junctions in endothelial cells and is therefore required for correct endothelial cell morphology and maintenance of dorsal aorta lumen expansion during embryogenesis. May further play a role in the polarity, proliferation and migration of endothelial cells, and therefore participates in angiogenesis. Inhibits the Wnt/beta-catenin signaling pathway, probably by recruiting CTNNB1 to recycling endosomes and hence preventing its translocation to the nucleus. Regulates the translocation of phosphorylated SRC to peripheral cell-matrix adhesion sites. Selectively promotes FGF-induced MAPK activation through SRC. In Danio rerio (Zebrafish), this protein is Angiomotin-like 2a (amotl2a).